Reading from the N-terminus, the 376-residue chain is DNA polymerase IV (376 aa).

The UmuC domain occupies 6-187; that stretch reads IIHIDMDAFF…LSIGKFYGVG (182 aa). Mg(2+)-binding residues include Asp-10 and Asp-105. Glu-106 is a catalytic residue.

It belongs to the DNA polymerase type-Y family. Monomer. It depends on Mg(2+) as a cofactor.

It localises to the cytoplasm. It catalyses the reaction DNA(n) + a 2'-deoxyribonucleoside 5'-triphosphate = DNA(n+1) + diphosphate. Its function is as follows. Poorly processive, error-prone DNA polymerase involved in untargeted mutagenesis. Copies undamaged DNA at stalled replication forks, which arise in vivo from mismatched or misaligned primer ends. These misaligned primers can be extended by PolIV. Exhibits no 3'-5' exonuclease (proofreading) activity. May be involved in translesional synthesis, in conjunction with the beta clamp from PolIII. The protein is DNA polymerase IV of Desulfotalea psychrophila (strain LSv54 / DSM 12343).